A 64-amino-acid polypeptide reads, in one-letter code: Putative H/ACA ribonucleoprotein complex subunit 3 (64 aa).

This sequence belongs to the NOP10 family. Component of the small nucleolar ribonucleoprotein particles containing H/ACA-type snoRNAs (H/ACA snoRNPs).

The protein localises to the nucleus. It localises to the nucleolus. Required for ribosome biogenesis. Part of a complex which catalyzes pseudouridylation of rRNA. This involves the isomerization of uridine such that the ribose is subsequently attached to C5, instead of the normal N1. Pseudouridine ('psi') residues may serve to stabilize the conformation of rRNAs. This chain is Putative H/ACA ribonucleoprotein complex subunit 3 (nola-3), found in Caenorhabditis elegans.